The sequence spans 449 residues: UNC93-like protein MFSD11 (449 aa).

Residues 8 to 28 traverse the membrane as a helical segment; that stretch reads LFNIIILGVAFMFMFTAFQTC. N-linked (GlcNAc...) asparagine glycosylation is present at asparagine 40. The next 5 membrane-spanning stretches (helical) occupy residues 53 to 73, 74 to 94, 96 to 116, 138 to 158, and 170 to 190; these read AIIYGVFSASNLITPSVVAIV, GPQLSMFASGLFYSMYIAVFI, PFPWSFYTASVFIGIAAAVLW, IFWALLQSSLFFGNLYIYFAW, and RTVFIALTVISLVGTVLFFLI. A Phosphoserine modification is found at serine 204. 6 consecutive transmembrane segments (helical) span residues 239 to 259, 277 to 297, 309 to 329, 359 to 379, 385 to 405, and 410 to 430; these read MLLLSITTAYTGLELTFFSGV, LIGLSGIFIGIGEILGGSLFG, PVVLLGILVHFIAFYLIFLNM, FLLGLGDSCFNTQLLSILGFL, APAFAIFKFVQSICAAVAFFY, and LLHWQLLVMVIFGFFGTISFF.

It belongs to the unc-93 family.

The protein localises to the membrane. The polypeptide is UNC93-like protein MFSD11 (MFSD11) (Macaca fascicularis (Crab-eating macaque)).